A 93-amino-acid polypeptide reads, in one-letter code: Alpha-defensin 16 (93 aa).

The N-terminal stretch at 1 to 19 is a signal peptide; sequence MKTLILLSALVLLAFQVQA. The propeptide occupies 20 to 58; it reads DPIQNTDEETKTEEQPGEEDQAVSVSFGDPEGTSLQEES. Residues 22–54 are disordered; sequence IQNTDEETKTEEQPGEEDQAVSVSFGDPEGTSL. 3 disulfides stabilise this stretch: Cys-64–Cys-92, Cys-66–Cys-81, and Cys-71–Cys-91.

The protein belongs to the alpha-defensin family. Paneth cells of the small bowel.

The protein resides in the secreted. Functionally, probably contributes to the antimicrobial barrier function of the small bowel mucosa. In Mus musculus (Mouse), this protein is Alpha-defensin 16 (Defa16).